Reading from the N-terminus, the 470-residue chain is Protein naked cuticle homolog 1 (470 aa).

Disordered regions lie at residues 1 to 21 (MGKL…PEGD) and 90 to 114 (PPEK…PCPG). Glycine 2 is lipidated: N-myristoyl glycine. Positions 92 to 109 (EKTDGLGSGDEKKMERVS) are enriched in basic and acidic residues. The interval 125–190 (QCDVSMEEDS…LRVKLTVAPD (66 aa)) is interaction with DVL1, DVL2 and DVL3. The EF-hand domain maps to 131-166 (EEDSRQEWTFTLYDFDNNGKVTREDITSLLHTIYEV). Aspartate 144, aspartate 146, asparagine 148, lysine 150, and aspartate 155 together coordinate Ca(2+). A compositionally biased stretch (polar residues) spans 192–205 (SQSKRSVLVNQADL). Disordered stretches follow at residues 192-228 (SQSK…KKQR), 271-314 (QFGP…QGVD), 337-357 (GTQD…KSVG), and 446-470 (GQPV…FYQT). The segment covering 210 to 227 (PRAETKPTEDLRSWEKKQ) has biased composition (basic and acidic residues). The segment covering 271–281 (QFGPGSPSVAQ) has biased composition (polar residues). Residues 452 to 470 (HEHHHHHEHHHHYHHFYQT) show a composition bias toward basic residues.

Belongs to the NKD family. In terms of assembly, interacts with DVL1, DVL2, DVL3 and PPP2R3A. Expressed in colon, heart, kidney, leukocyte, liver, lung, ovary, pancreas, placenta, prostate, skeletal muscle, small intestine and spleen.

The protein localises to the cell membrane. Its subcellular location is the cytoplasm. Functionally, cell autonomous antagonist of the canonical Wnt signaling pathway. May activate a second Wnt signaling pathway that controls planar cell polarity. This Homo sapiens (Human) protein is Protein naked cuticle homolog 1 (NKD1).